The sequence spans 489 residues: tRNA(Ile)-lysidine synthase (489 aa).

An ATP-binding site is contributed by 35-40 (SGGLDS).

Belongs to the tRNA(Ile)-lysidine synthase family.

It localises to the cytoplasm. It carries out the reaction cytidine(34) in tRNA(Ile2) + L-lysine + ATP = lysidine(34) in tRNA(Ile2) + AMP + diphosphate + H(+). In terms of biological role, ligates lysine onto the cytidine present at position 34 of the AUA codon-specific tRNA(Ile) that contains the anticodon CAU, in an ATP-dependent manner. Cytidine is converted to lysidine, thus changing the amino acid specificity of the tRNA from methionine to isoleucine. The protein is tRNA(Ile)-lysidine synthase of Burkholderia mallei (strain ATCC 23344).